The primary structure comprises 510 residues: D-alanine--D-alanyl carrier protein ligase (510 aa).

157–158 (TS) contacts ATP. D-alanine is bound at residue Asp202. An ATP-binding site is contributed by 297–302 (NTYGPT). A D-alanine-binding site is contributed by Val306. Residues Asp389 and Lys498 each contribute to the ATP site. D-alanine is bound at residue Lys498.

Belongs to the ATP-dependent AMP-binding enzyme family. DltA subfamily.

It localises to the cytoplasm. It carries out the reaction holo-[D-alanyl-carrier protein] + D-alanine + ATP = D-alanyl-[D-alanyl-carrier protein] + AMP + diphosphate. The protein operates within cell wall biogenesis; lipoteichoic acid biosynthesis. Its function is as follows. Catalyzes the first step in the D-alanylation of lipoteichoic acid (LTA), the activation of D-alanine and its transfer onto the D-alanyl carrier protein (Dcp) DltC. In an ATP-dependent two-step reaction, forms a high energy D-alanyl-AMP intermediate, followed by transfer of the D-alanyl residue as a thiol ester to the phosphopantheinyl prosthetic group of the Dcp. D-alanylation of LTA plays an important role in modulating the properties of the cell wall in Gram-positive bacteria, influencing the net charge of the cell wall. This is D-alanine--D-alanyl carrier protein ligase from Listeria monocytogenes serovar 1/2a (strain ATCC BAA-679 / EGD-e).